The primary structure comprises 473 residues: ATP synthase subunit beta (473 aa).

An ATP-binding site is contributed by 158–165 (GGAGVGKT).

Belongs to the ATPase alpha/beta chains family. In terms of assembly, F-type ATPases have 2 components, CF(1) - the catalytic core - and CF(0) - the membrane proton channel. CF(1) has five subunits: alpha(3), beta(3), gamma(1), delta(1), epsilon(1). CF(0) has three main subunits: a(1), b(2) and c(9-12). The alpha and beta chains form an alternating ring which encloses part of the gamma chain. CF(1) is attached to CF(0) by a central stalk formed by the gamma and epsilon chains, while a peripheral stalk is formed by the delta and b chains.

It localises to the cell membrane. The enzyme catalyses ATP + H2O + 4 H(+)(in) = ADP + phosphate + 5 H(+)(out). Produces ATP from ADP in the presence of a proton gradient across the membrane. The catalytic sites are hosted primarily by the beta subunits. This is ATP synthase subunit beta from Bacillus sp. (strain PS3).